We begin with the raw amino-acid sequence, 509 residues long: ATP synthase subunit alpha (509 aa).

ATP is bound at residue 169–176; that stretch reads GDRQTGKT.

Belongs to the ATPase alpha/beta chains family. In terms of assembly, F-type ATPases have 2 components, CF(1) - the catalytic core - and CF(0) - the membrane proton channel. CF(1) has five subunits: alpha(3), beta(3), gamma(1), delta(1), epsilon(1). CF(0) has three main subunits: a(1), b(2) and c(9-12). The alpha and beta chains form an alternating ring which encloses part of the gamma chain. CF(1) is attached to CF(0) by a central stalk formed by the gamma and epsilon chains, while a peripheral stalk is formed by the delta and b chains.

Its subcellular location is the cell inner membrane. It catalyses the reaction ATP + H2O + 4 H(+)(in) = ADP + phosphate + 5 H(+)(out). Functionally, produces ATP from ADP in the presence of a proton gradient across the membrane. The alpha chain is a regulatory subunit. This chain is ATP synthase subunit alpha, found in Sinorhizobium fredii (strain NBRC 101917 / NGR234).